The following is a 354-amino-acid chain: Serum paraoxonase/arylesterase 2 (354 aa).

N-linked (GlcNAc...) asparagine glycosylation occurs at N29. A disulfide bond links C42 and C352. The Ca(2+) site is built by E53 and D54. Catalysis depends on H114, which acts as the Proton acceptor. Ca(2+) is bound by residues I116, N167, D168, and N223. A glycan (N-linked (GlcNAc...) asparagine) is linked at N254. The Ca(2+) site is built by D268 and N269. 2 N-linked (GlcNAc...) asparagine glycosylation sites follow: N269 and N323.

Belongs to the paraoxonase family. It depends on Ca(2+) as a cofactor. Glycosylated. In terms of processing, the signal sequence is not cleaved.

Its subcellular location is the membrane. The catalysed reaction is a phenyl acetate + H2O = a phenol + acetate + H(+). It carries out the reaction An aryl dialkyl phosphate + H2O = dialkyl phosphate + an aryl alcohol.. In terms of biological role, the absence of paraoxonase activity in turkey and chicken blood and in turkey liver indicates that PON2, if expressed, does not hydrolyze paraoxon. The chain is Serum paraoxonase/arylesterase 2 (PON2) from Gallus gallus (Chicken).